A 169-amino-acid polypeptide reads, in one-letter code: Peptide deformylase (169 aa).

Fe cation contacts are provided by Cys91 and His133. Glu134 is an active-site residue. His137 contacts Fe cation.

It belongs to the polypeptide deformylase family. It depends on Fe(2+) as a cofactor.

The catalysed reaction is N-terminal N-formyl-L-methionyl-[peptide] + H2O = N-terminal L-methionyl-[peptide] + formate. Its function is as follows. Removes the formyl group from the N-terminal Met of newly synthesized proteins. Requires at least a dipeptide for an efficient rate of reaction. N-terminal L-methionine is a prerequisite for activity but the enzyme has broad specificity at other positions. The chain is Peptide deformylase from Salmonella typhi.